A 3133-amino-acid polypeptide reads, in one-letter code: Hemocytin (3133 aa).

The region spanning 40-96 is the TIL 1 domain; sequence CTGGQQYTVCADSCLRKCSDTALAASGQCKPVCVEGCACSPSQLLDDNGVCVPVAKC. N-linked (GlcNAc...) asparagine glycosylation is present at Asn-151. One can recognise a TIL 2 domain in the interval 153 to 209; that stretch reads TAQNMEFTTCETSEPLTCKNMHLPPSTQTAECRPGCQCKKGQVLDTASKRCVPATQC. N-linked (GlcNAc...) asparagine glycosylation is present at Asn-237. The region spanning 247-418 is the VWFD 1 domain; sequence GVCGAWGDSH…DSWKLKPTCP (172 aa). Intrachain disulfides connect Cys-249/Cys-380, Cys-271/Cys-417, and Cys-295/Cys-302. The region spanning 509–576 is the TIL 3 domain; it reads CDEVCSNYDS…TTECVPRAKC (68 aa). Asn-564 is a glycosylation site (N-linked (GlcNAc...) asparagine). Residues 661–680 are disordered; that stretch reads PDGQSVESEPLPKPNELQIG. Residues 770 to 837 enclose the TIL 4 domain; the sequence is CPPGEVYQAC…ERTCVPVKDC (68 aa). The tract at residues 899–924 is disordered; that stretch reads STTTTTTTSTTTTTTTPEPTETTTET. Cystine bridges form between Cys-940-Cys-1095 and Cys-1116-Cys-1254. F5/8 type C domains follow at residues 940–1095 and 1116–1254; these read CSPD…IIGC and CTEP…PIGC. Asn-1170, Asn-1387, Asn-1622, Asn-1727, and Asn-1847 each carry an N-linked (GlcNAc...) asparagine glycan. The region spanning 1619–1794 is the VWFD 2 domain; sequence VFCNMTGRTF…KPGVPADACA (176 aa). Disulfide bonds link Cys-1621/Cys-1754 and Cys-1641/Cys-1793. Residues 1890–1948 form the TIL 5 domain; sequence CPPPLVHYDCYRKRCEETCAPYPNAARACPAQEGQCSPGCYCPDGKLRKGDQCVLPADC. The VWFD 3 domain maps to 1951-2136; it reads CTCTGVGTPA…WQASPEKLTE (186 aa). Cystine bridges form between Cys-1953/Cys-2099 and Cys-2001/Cys-2009. N-linked (GlcNAc...) asparagine glycosylation is found at Asn-1975 and Asn-1985. N-linked (GlcNAc...) asparagine glycosylation is found at Asn-2093, Asn-2113, Asn-2161, Asn-2276, and Asn-2451. Positions 2229–2285 constitute a TIL 6 domain; the sequence is CEEPFVYRACVDCERTCDNYEQLQTSPEKCTNKPVEGCFCPEGKVRVNNTCIEPGKC. A VWFC 1 domain is found at 2553-2622; it reads VACRHQDNVY…DSGQCCGKCE (70 aa). N-linked (GlcNAc...) asparagine glycans are attached at residues Asn-2647, Asn-2654, Asn-2663, Asn-2794, Asn-2810, Asn-2865, Asn-2929, Asn-2964, and Asn-3028. In terms of domain architecture, VWFC 2 spans 2842–2907; the sequence is VACRDGDKIY…AADHCCGRCV (66 aa). 4 disulfides stabilise this stretch: Cys-2971–Cys-3040, Cys-2991–Cys-3054, Cys-3004–Cys-3070, and Cys-3020–Cys-3072. The CTCK domain maps to 2971 to 3076; it reads CNEKPQALSK…PARCHCAACG (106 aa).

In terms of processing, may be converted into the 260 kDa mature hemocytin by proteolysis.

Functionally, adhesive protein and relates to hemostasis or encapsulation of foreign substances for self-defense. The protein is Hemocytin of Bombyx mori (Silk moth).